A 469-amino-acid chain; its full sequence is Protein RUFY3 (469 aa).

2 positions are modified to phosphothreonine: threonine 5 and threonine 12. A phosphoserine mark is found at serine 34 and serine 49. Threonine 51 carries the phosphothreonine modification. The RUN domain occupies 95-227 (DSDYAPLQQF…IDANFCMKGE (133 aa)). 2 coiled-coil regions span residues 271–362 (NRHL…VEKE) and 422–463 (KSEL…AANK).

Interacts with PAK1. Interacts (via C-terminus) with Ras-related Rab-5 proteins. Interacts (via C-terminus) with Ras-related Rap-2 proteins. Interacts with PIK3CA and PIK3R1. Interacts (via N-terminus) with FSCN1; this interaction induces neuron axon development. Interacts with DBN1. Interacts (via the second coiled coil) with GTP-, but not GDP-bound ARL8A and ARL8B. Interacts with dynactin/DCTN1 and the dynein intermediate chain DYNC1I1/2. Directly interacts with DYNC1LI1. Phosphorylated by PAK1. Isoform 1 is partially phosphorylated. Overexpressed in gastric cancer cells and tissues (at protein level).

Its subcellular location is the cytoplasm. The protein localises to the endomembrane system. It is found in the cell projection. The protein resides in the invadopodium. It localises to the perikaryon. Its subcellular location is the growth cone. The protein localises to the filopodium. It is found in the lamellipodium. The protein resides in the lysosome. Its function is as follows. ARL8 effector that promotes the coupling of endolysosomes to dynein-dynactin for retrograde transport along microtubules. Acts by binding both GTP-bound ARL8 and dynein-dynactin. In nonneuronal cells, promotes concentration of endolysosomes in the juxtanuclear area. In hippocampal neurons, drives retrograde transport of endolysosomes from the axon to the soma. Plays a role in the generation of neuronal polarity formation and axon growth. Implicated in the formation of a single axon by developing neurons. May inhibit the formation of additional axons by inhibition of PI3K in minor neuronal processes. Plays a role in the formation of F-actin-enriched protrusive structures at the cell periphery. Plays a role in cytoskeletal organization by regulating the subcellular localization of FSCN1 and DBN1 at axonal growth cones. This chain is Protein RUFY3, found in Homo sapiens (Human).